A 464-amino-acid chain; its full sequence is Heterogeneous nuclear ribonucleoprotein K (464 aa).

An N-acetylmethionine modification is found at Met1. The disordered stretch occupies residues 1-37; it reads METEQPEETFPNTETNGEFGKRPAEDMEEEQAFKRSR. Residues 1-276 form a necessary for interaction with DDX1 region; that stretch reads METEQPEETF…GRGGRPMPPS (276 aa). Residues 19-37 show a composition bias toward basic and acidic residues; sequence FGKRPAEDMEEEQAFKRSR. N6-acetyllysine; alternate is present on Lys34. A Glycyl lysine isopeptide (Lys-Gly) (interchain with G-Cter in SUMO1); alternate cross-link involves residue Lys34. Residue Lys34 forms a Glycyl lysine isopeptide (Lys-Gly) (interchain with G-Cter in SUMO2); alternate linkage. Position 36 is a phosphoserine (Ser36). Thr39 carries the phosphothreonine modification. The KH 1 domain occupies 42-104; the sequence is MVELRILLQS…ETIGEILKKI (63 aa). Glycyl lysine isopeptide (Lys-Gly) (interchain with G-Cter in SUMO2) cross-links involve residues Lys52 and Lys60. 2 repeat units span residues 54 to 76 and 59 to 62. The segment at 54 to 421 is 2 X 22 AA approximate repeats; it reads AGAVIGKGGK…QIRHESGASI (368 aa). Residues 59-407 form a 5 X 4 AA repeats of G-X-G-G region; the sequence is GKGGKNIKAL…LAGSIIGKGG (349 aa). Phosphoserine occurs at positions 75 and 116. The 66-residue stretch at 144–209 folds into the KH 2 domain; that stretch reads DCELRLLIHQ…DRVVECIKII (66 aa). Residue Lys163 forms a Glycyl lysine isopeptide (Lys-Gly) (interchain with G-Cter in SUMO1); alternate linkage. A Glycyl lysine isopeptide (Lys-Gly) (interchain with G-Cter in SUMO2); alternate cross-link involves residue Lys163. N6-acetyllysine is present on Lys198. Phosphoserine is present on residues Ser214 and Ser216. Lys219 participates in a covalent cross-link: Glycyl lysine isopeptide (Lys-Gly) (interchain with G-Cter in SUMO2); alternate. Lys219 carries the post-translational modification N6-succinyllysine; alternate. Positions 236–273 are RNA-binding RGG-box; it reads YGGFTMMFDDRRGRPVGFPMRGRGGFDRMPPGRGGRPM. 3 consecutive repeat copies span residues 245 to 250, 257 to 260, and 267 to 270. The segment at 245 to 329 is 2 X 6 AA approximate repeats; it reads DRRGRPVGFP…LMAYDRRGRP (85 aa). The disordered stretch occupies residues 250–329; that stretch reads PVGFPMRGRG…LMAYDRRGRP (80 aa). Positions 252-266 are enriched in low complexity; it reads GFPMRGRGGFDRMPP. Over residues 276-285 the composition is skewed to basic and acidic residues; it reads SRRDYDDMSP. Ser284 carries the phosphoserine modification. Residues 295–298 form a 3-4 repeat; sequence GRGG. Arg316 is subject to Omega-N-methylarginine. Residues 324–329 form a 2-2 repeat; it reads DRRGRP. At Arg377 the chain carries Omega-N-methylarginine. A Phosphoserine modification is found at Ser379. Tyr380 bears the Phosphotyrosine mark. The 65-residue stretch at 387 to 451 folds into the KH 3 domain; the sequence is IITTQVTIPK…DQIQNAQYLL (65 aa). Tandem repeats lie at residues 399-421 and 404-407. The residue at position 405 (Lys405) is an N6-acetyllysine; alternate. Lys405 is covalently cross-linked (Glycyl lysine isopeptide (Lys-Gly) (interchain with G-Cter in SUMO2); alternate). Residue Ser420 is modified to Phosphoserine. A Glycyl lysine isopeptide (Lys-Gly) (interchain with G-Cter in SUMO1); alternate cross-link involves residue Lys422. Lys422 is covalently cross-linked (Glycyl lysine isopeptide (Lys-Gly) (interchain with G-Cter in SUMO2); alternate). Residue Lys422 forms a Glycyl lysine isopeptide (Lys-Gly) (interchain with G-Cter in SUMO); alternate linkage.

In terms of assembly, identified in the spliceosome C complex. Interacts with ANKRD28, RBM42 and ZIK1. Interacts with DDX1. Interacts with MDM2; this interaction leads to ubiquitination and proteasomal degradation. Interacts with p53/TP53. Interacts with BRDT. Interacts with IVNS1ABP. Interacts with PPIA/CYPA. Part of a transcription inhibitory ribonucleoprotein complex composed at least of the circular RNA circZNF827, ZNF827 and HNRNPL. Post-translationally, sumoylated by CBX4. Sumoylation is increased upon DNA damage, such as that produced by doxorubicin, etoposide, UV light and camptothecin, due to enhanced CBX4 phosphorylation by HIPK2 under these conditions. In terms of processing, ubiquitinated by MDM2. Doxorubicin treatment does not affect monoubiquitination, but slightly decreases HNRNPK poly-ubiquitination. O-glycosylated (O-GlcNAcylated), in a cell cycle-dependent manner.

The protein resides in the cytoplasm. It localises to the nucleus. It is found in the nucleoplasm. Its subcellular location is the cell projection. The protein localises to the podosome. In terms of biological role, one of the major pre-mRNA-binding proteins. Binds tenaciously to poly(C) sequences. Likely to play a role in the nuclear metabolism of hnRNAs, particularly for pre-mRNAs that contain cytidine-rich sequences. Can also bind poly(C) single-stranded DNA. Plays an important role in p53/TP53 response to DNA damage, acting at the level of both transcription activation and repression. When sumoylated, acts as a transcriptional coactivator of p53/TP53, playing a role in p21/CDKN1A and 14-3-3 sigma/SFN induction. As far as transcription repression is concerned, acts by interacting with long intergenic RNA p21 (lincRNA-p21), a non-coding RNA induced by p53/TP53. This interaction is necessary for the induction of apoptosis, but not cell cycle arrest. As part of a ribonucleoprotein complex composed at least of ZNF827, HNRNPL and the circular RNA circZNF827 that nucleates the complex on chromatin, may negatively regulate the transcription of genes involved in neuronal differentiation. This chain is Heterogeneous nuclear ribonucleoprotein K (HNRNPK), found in Macaca fascicularis (Crab-eating macaque).